The primary structure comprises 344 residues: MAP3K12-binding inhibitory protein 1 (344 aa).

S91 bears the Phosphoserine mark. Glycyl lysine isopeptide (Lys-Gly) (interchain with G-Cter in SUMO2) cross-links involve residues K94, K118, K129, K139, K153, and K235. The interval 172–344 (AEINENNVRE…AESMATHHLP (173 aa)) is interaction with MAP3K12. The segment at 271–285 (IYQRIKKLEDKILEL) is leucine-zipper 1. An N6-acetyllysine; alternate modification is found at K301. K301 participates in a covalent cross-link: Glycyl lysine isopeptide (Lys-Gly) (interchain with G-Cter in SUMO2); alternate. Residues K304 and K325 each participate in a glycyl lysine isopeptide (Lys-Gly) (interchain with G-Cter in SUMO2) cross-link. Residues 314 to 329 (LAELDEKISALKQALL) form a leucine-zipper 2 region.

Component of the ADA2A-containing complex (ATAC), composed of KAT14, KAT2A, TADA2L, TADA3L, ZZ3, MBIP, WDR5, YEATS2, CCDC101 and DR1. In the complex, it probably interacts directly with KAT2A, KAT14 and WDR5. Ubiquitous. High expression seen in the heart and lung.

Its subcellular location is the nucleus. It is found in the cytoplasm. Inhibits the MAP3K12 activity to induce the activation of the JNK/SAPK pathway. Component of the ATAC complex, a complex with histone acetyltransferase activity on histones H3 and H4. The protein is MAP3K12-binding inhibitory protein 1 (MBIP) of Homo sapiens (Human).